A 210-amino-acid polypeptide reads, in one-letter code: UMP-CMP kinase 3 (210 aa).

34 to 39 (GSGKGT) lines the ATP pocket. The segment at 54–83 (SAGDLLRAEIKSGSENGTMIENMIKEGKIV) is NMP. A ribonucleoside 5'-phosphate contacts are provided by residues arginine 60, 81–83 (KIV), and 108–111 (GFPR). CMP is bound at residue asparagine 115. The interval 146–154 (GRNQGRVDD) is LID. Arginine 147 provides a ligand contact to ATP. 2 residues coordinate a ribonucleoside 5'-phosphate: arginine 151 and arginine 162. Residue lysine 190 participates in ATP binding.

This sequence belongs to the adenylate kinase family. UMP-CMP kinase subfamily. As to quaternary structure, monomer. Requires Mg(2+) as cofactor.

Its subcellular location is the cytoplasm. It is found in the nucleus. The enzyme catalyses UMP + ATP = UDP + ADP. The catalysed reaction is CMP + ATP = CDP + ADP. It carries out the reaction dCMP + ATP = dCDP + ADP. In terms of biological role, catalyzes the phosphorylation of pyrimidine nucleoside monophosphates at the expense of ATP. Plays an important role in de novo pyrimidine nucleotide biosynthesis. Has preference for UMP and CMP as phosphate acceptors. This chain is UMP-CMP kinase 3 (URA6), found in Oryza sativa subsp. japonica (Rice).